We begin with the raw amino-acid sequence, 1358 residues long: Protein STU1 (1358 aa).

Disordered regions lie at residues 915 to 950 (FVAD…SHGF) and 970 to 990 (QPET…DESN). Positions 926 to 949 (DDTKKNGSDVVDHEEIRDHEESHG) are enriched in basic and acidic residues. Over residues 973–990 (TVDENVDPMEVDSPDESN) the composition is skewed to acidic residues.

The protein belongs to the CLASP family. Interacts with microtubules.

Its subcellular location is the cytoplasm. It localises to the cytoskeleton. The protein localises to the nucleus. The protein resides in the spindle. Microtubule binding protein that promotes the stabilization of dynamic microtubules. Required for mitotic spindle formation. The protein is Protein STU1 (STU1) of Kluyveromyces lactis (strain ATCC 8585 / CBS 2359 / DSM 70799 / NBRC 1267 / NRRL Y-1140 / WM37) (Yeast).